Here is an 833-residue protein sequence, read N- to C-terminus: Leucine--tRNA ligase (833 aa).

The 'HIGH' region motif lies at 41 to 52 (PYPSGAGLHVGH). A 'KMSKS' region motif is present at residues 610-614 (KMSKS). K613 contributes to the ATP binding site.

This sequence belongs to the class-I aminoacyl-tRNA synthetase family.

The protein localises to the cytoplasm. It carries out the reaction tRNA(Leu) + L-leucine + ATP = L-leucyl-tRNA(Leu) + AMP + diphosphate. The sequence is that of Leucine--tRNA ligase from Streptococcus suis (strain 98HAH33).